The primary structure comprises 151 residues: Gametocyte-specific factor 1-like (151 aa).

2 CHHC U11-48K-type zinc fingers span residues 6–33 (IEICPYNPHHRIPLSRFQYHLASCRKKN) and 40–67 (MASCKYNACHVVPIRKLAEHEATCVNRS). Positions 9, 15, 25, 29, 43, 49, 59, and 63 each coordinate Zn(2+). Residues 130–151 (QESRGGDQCPEDPQTRTRKANF) form a disordered region.

Belongs to the UPF0224 (FAM112) family.

This is Gametocyte-specific factor 1-like (Gtsf1l) from Mus musculus (Mouse).